Here is a 305-residue protein sequence, read N- to C-terminus: Putative UDP-glucose 4-epimerase (305 aa).

NAD(+) is bound by residues 10–11, 30–35, 50–51, and 71–75; these read FI, DNLTTG, DI, and QAAQI. Substrate contacts are provided by serine 115 and tyrosine 140. The NAD(+) site is built by tyrosine 140 and lysine 144. Tyrosine 140 acts as the Proton acceptor in catalysis. Substrate contacts are provided by residues asparagine 169, 183–184, 198–200, arginine 207, and 263–266; these read VI, IIF, and REGE.

The protein belongs to the NAD(P)-dependent epimerase/dehydratase family. Requires NAD(+) as cofactor.

The catalysed reaction is UDP-alpha-D-glucose = UDP-alpha-D-galactose. It participates in carbohydrate metabolism; galactose metabolism. Functionally, involved in the metabolism of galactose. Catalyzes the conversion of UDP-galactose (UDP-Gal) to UDP-glucose (UDP-Glc) through a mechanism involving the transient reduction of NAD. This chain is Putative UDP-glucose 4-epimerase, found in Methanocaldococcus jannaschii (strain ATCC 43067 / DSM 2661 / JAL-1 / JCM 10045 / NBRC 100440) (Methanococcus jannaschii).